The chain runs to 415 residues: UDP-N-acetylglucosamine 1-carboxyvinyltransferase 1 (415 aa).

23 to 24 (KN) is a binding site for phosphoenolpyruvate. Residue Arg-92 coordinates UDP-N-acetyl-alpha-D-glucosamine. Cys-116 acts as the Proton donor in catalysis. Residue Cys-116 is modified to 2-(S-cysteinyl)pyruvic acid O-phosphothioketal. Residues 121-125 (RPIDL), Asp-304, and Val-326 contribute to the UDP-N-acetyl-alpha-D-glucosamine site.

It belongs to the EPSP synthase family. MurA subfamily.

It localises to the cytoplasm. It catalyses the reaction phosphoenolpyruvate + UDP-N-acetyl-alpha-D-glucosamine = UDP-N-acetyl-3-O-(1-carboxyvinyl)-alpha-D-glucosamine + phosphate. It participates in cell wall biogenesis; peptidoglycan biosynthesis. Functionally, cell wall formation. Adds enolpyruvyl to UDP-N-acetylglucosamine. This is UDP-N-acetylglucosamine 1-carboxyvinyltransferase 1 from Caldanaerobacter subterraneus subsp. tengcongensis (strain DSM 15242 / JCM 11007 / NBRC 100824 / MB4) (Thermoanaerobacter tengcongensis).